A 251-amino-acid chain; its full sequence is HTH-type transcriptional regulator IolR (251 aa).

The region spanning 1–57 (MKLMRIQEMEEYILSHGTVSLDELCQVFNVSKNTVRRDINKLTEKGAIEKVYGGVTS) is the HTH deoR-type domain. A DNA-binding region (H-T-H motif) is located at residues 19–38 (VSLDELCQVFNVSKNTVRRD).

Functionally, iol operon repressor. The chain is HTH-type transcriptional regulator IolR (iolR) from Bacillus subtilis (strain 168).